Reading from the N-terminus, the 85-residue chain is MAKTKSGGSTSNGRDSKGRRLGQKLGDGQFALAGSIIYRQRGTKIHPGENVGIGKDHTLYTLIDGYIKYAIKRNRKYASAFEERK.

Over residues 1-13 the composition is skewed to polar residues; that stretch reads MAKTKSGGSTSNG. The tract at residues 1–26 is disordered; that stretch reads MAKTKSGGSTSNGRDSKGRRLGQKLG.

The protein belongs to the bacterial ribosomal protein bL27 family.

This Mycoplasma mobile (strain ATCC 43663 / 163K / NCTC 11711) (Mesomycoplasma mobile) protein is Large ribosomal subunit protein bL27.